The sequence spans 182 residues: MTFEQLIPLIIMAFALGMDAFSVSLGMGMMPLKLRQILYIGMTIGIFHIIMPFIGMVLGRFLSEKYGDIAHFAGAILLIGLGFYIVYSTILQNGETRTVPIGISLFVFAFGVSIDSFSVGLSLGIYGAQTIITILLFGFVSMLLAWIGLLIGRHAKDMLGTYGEIVGGIILVGFGLYILFPI.

6 helical membrane-spanning segments follow: residues 6 to 26 (LIPL…VSLG), 37 to 57 (ILYI…IGMV), 71 to 91 (HFAG…STIL), 101 to 121 (IGIS…SVGL), 131 to 151 (IITI…GLLI), and 162 to 182 (YGEI…LFPI).

This sequence belongs to the MntP (TC 9.B.29) family.

It localises to the cell membrane. In terms of biological role, probably functions as a manganese efflux pump. The polypeptide is Putative manganese efflux pump MntP (Bacillus cereus (strain G9842)).